The sequence spans 1071 residues: Kinesin-like protein KIN-14J (1071 aa).

One can recognise a Calponin-homology (CH) domain in the interval 39–142; it reads KKGHQSLVEW…SLKALKASFS (104 aa). Residues 157–181 form a disordered region; sequence WSLPEDHSDSRGDDRNFTDGFQSKE. The span at 158–173 shows a compositional bias: basic and acidic residues; it reads SLPEDHSDSRGDDRNF. Residues 299 to 389 adopt a coiled-coil conformation; sequence EKTRIEEKER…ELEKLCQSKS (91 aa). In terms of domain architecture, Kinesin motor spans 472–800; that stretch reads NIRVYCRIRP…LKFAERVSGV (329 aa). ATP is bound at residue 556–563; sequence GQTGSGKT. Positions 811 to 844 form a coiled coil; that stretch reads GRDVRQLMEQVSNLKDVIAKKDEELQNFQKVKGN. Disordered stretches follow at residues 852–931 and 995–1071; these read GLSN…AAKG and ARMT…NRRR. Basic and acidic residues-rich tracts occupy residues 910 to 921 and 995 to 1017; these read SDERKHQKDYHQ and ARMT…KDRT. Positions 1034-1049 are enriched in polar residues; that stretch reads TRPSRLSIATSSSSKA.

This sequence belongs to the TRAFAC class myosin-kinesin ATPase superfamily. Kinesin family. KIN-14 subfamily.

This chain is Kinesin-like protein KIN-14J, found in Arabidopsis thaliana (Mouse-ear cress).